A 494-amino-acid polypeptide reads, in one-letter code: Cytochrome P450 2G1 (494 aa).

Heme is bound at residue cysteine 439.

The protein belongs to the cytochrome P450 family. Heme is required as a cofactor. Olfactory epithelium.

The protein resides in the endoplasmic reticulum membrane. It localises to the microsome membrane. The catalysed reaction is an organic molecule + reduced [NADPH--hemoprotein reductase] + O2 = an alcohol + oxidized [NADPH--hemoprotein reductase] + H2O + H(+). Cytochromes P450 are a group of heme-thiolate monooxygenases. This isozyme seems to be implicated in olfaction. This Rattus norvegicus (Rat) protein is Cytochrome P450 2G1 (Cyp2g1).